Reading from the N-terminus, the 206-residue chain is LexA repressor (206 aa).

Residues 28-48 (RAEIAKRLGFKSANAAEEHLK) constitute a DNA-binding region (H-T-H motif). Catalysis depends on for autocatalytic cleavage activity residues S123 and K160.

Belongs to the peptidase S24 family. Homodimer.

It catalyses the reaction Hydrolysis of Ala-|-Gly bond in repressor LexA.. Its function is as follows. Represses a number of genes involved in the response to DNA damage (SOS response), including recA and lexA. In the presence of single-stranded DNA, RecA interacts with LexA causing an autocatalytic cleavage which disrupts the DNA-binding part of LexA, leading to derepression of the SOS regulon and eventually DNA repair. This Shewanella sediminis (strain HAW-EB3) protein is LexA repressor.